Consider the following 423-residue polypeptide: COP9 signalosome complex subunit 3 (423 aa).

Residues 197–365 (NFERALYFYE…GMVCFHDNPE (169 aa)) form the PCI domain. The disordered stretch occupies residues 403-423 (FVQKSMGSQDDDSGSKPSSYS).

This sequence belongs to the CSN3 family. Component of the CSN complex, probably composed of cops1, cops2, cops3, cops4, cops5, cops6, cops7, cops8 and cops9.

The protein localises to the cytoplasm. The protein resides in the nucleus. Its function is as follows. Component of the COP9 signalosome complex (CSN), a complex involved in various cellular and developmental processes. The CSN complex is an essential regulator of the ubiquitin (Ubl) conjugation pathway by mediating the deneddylation of the cullin subunits of E3 ligase complexes, leading to modify the Ubl ligase activity. This chain is COP9 signalosome complex subunit 3 (cops3), found in Xenopus tropicalis (Western clawed frog).